The following is a 291-amino-acid chain: Formamidopyrimidine-DNA glycosylase (291 aa).

Catalysis depends on Pro2, which acts as the Schiff-base intermediate with DNA. Glu3 acts as the Proton donor in catalysis. The Proton donor; for beta-elimination activity role is filled by Lys58. Positions 104, 123, and 166 each coordinate DNA. Residues 257 to 291 form an FPG-type zinc finger; the sequence is KVYDREGEPCPTCGGTVQRFVQNGRSTFWCPKCQK. The Proton donor; for delta-elimination activity role is filled by Arg281.

The protein belongs to the FPG family. Monomer. The cofactor is Zn(2+).

The enzyme catalyses Hydrolysis of DNA containing ring-opened 7-methylguanine residues, releasing 2,6-diamino-4-hydroxy-5-(N-methyl)formamidopyrimidine.. It carries out the reaction 2'-deoxyribonucleotide-(2'-deoxyribose 5'-phosphate)-2'-deoxyribonucleotide-DNA = a 3'-end 2'-deoxyribonucleotide-(2,3-dehydro-2,3-deoxyribose 5'-phosphate)-DNA + a 5'-end 5'-phospho-2'-deoxyribonucleoside-DNA + H(+). In terms of biological role, involved in base excision repair of DNA damaged by oxidation or by mutagenic agents. Acts as a DNA glycosylase that recognizes and removes damaged bases. Has a preference for oxidized purines, such as 7,8-dihydro-8-oxoguanine (8-oxoG). Has AP (apurinic/apyrimidinic) lyase activity and introduces nicks in the DNA strand. Cleaves the DNA backbone by beta-delta elimination to generate a single-strand break at the site of the removed base with both 3'- and 5'-phosphates. The sequence is that of Formamidopyrimidine-DNA glycosylase from Rhodopseudomonas palustris (strain ATCC BAA-98 / CGA009).